We begin with the raw amino-acid sequence, 556 residues long: Glutamine--tRNA ligase (556 aa).

The 'HIGH' region motif lies at 33-43; it reads PEPNGYLHIGH. ATP contacts are provided by residues 34–36 and 40–46; these read EPN and HIGHAKS. Residues Asp-66 and Tyr-210 each contribute to the L-glutamine site. Residues Thr-229, 259–260, and 267–269 contribute to the ATP site; these read RL and MSK. Positions 266–270 match the 'KMSKS' region motif; it reads VMSKR.

It belongs to the class-I aminoacyl-tRNA synthetase family. In terms of assembly, monomer.

It is found in the cytoplasm. It catalyses the reaction tRNA(Gln) + L-glutamine + ATP = L-glutaminyl-tRNA(Gln) + AMP + diphosphate. The polypeptide is Glutamine--tRNA ligase (Clostridium kluyveri (strain ATCC 8527 / DSM 555 / NBRC 12016 / NCIMB 10680 / K1)).